A 472-amino-acid chain; its full sequence is F-box protein At3g03040 (472 aa).

Residues 1 to 49 (MDLLSSLPDEVRCLILSFLTTKESASTSVLSKKWRNLFALVPNLDFDDS) form the F-box domain.

This Arabidopsis thaliana (Mouse-ear cress) protein is F-box protein At3g03040.